Consider the following 282-residue polypeptide: Pantothenate synthetase (282 aa).

30 to 37 provides a ligand contact to ATP; sequence MGALHQGH. Residue His-37 is the Proton donor of the active site. (R)-pantoate is bound at residue Gln-61. Gln-61 serves as a coordination point for beta-alanine. 149-152 serves as a coordination point for ATP; it reads GEKD. Gln-155 is a binding site for (R)-pantoate. ATP-binding positions include Leu-178 and 186–189; that span reads MSSR.

The protein belongs to the pantothenate synthetase family. In terms of assembly, homodimer.

The protein localises to the cytoplasm. The enzyme catalyses (R)-pantoate + beta-alanine + ATP = (R)-pantothenate + AMP + diphosphate + H(+). The protein operates within cofactor biosynthesis; (R)-pantothenate biosynthesis; (R)-pantothenate from (R)-pantoate and beta-alanine: step 1/1. Its function is as follows. Catalyzes the condensation of pantoate with beta-alanine in an ATP-dependent reaction via a pantoyl-adenylate intermediate. The polypeptide is Pantothenate synthetase (Flavobacterium psychrophilum (strain ATCC 49511 / DSM 21280 / CIP 103535 / JIP02/86)).